The following is a 204-amino-acid chain: Guanylate kinase (204 aa).

The 179-residue stretch at 3 to 181 folds into the Guanylate kinase-like domain; that stretch reads GTLIIITAPS…ALDDLVAVVR (179 aa). 10–17 is an ATP binding site; sequence APSGAGKT.

This sequence belongs to the guanylate kinase family.

The protein localises to the cytoplasm. It catalyses the reaction GMP + ATP = GDP + ADP. Functionally, essential for recycling GMP and indirectly, cGMP. The protein is Guanylate kinase of Aromatoleum aromaticum (strain DSM 19018 / LMG 30748 / EbN1) (Azoarcus sp. (strain EbN1)).